A 309-amino-acid polypeptide reads, in one-letter code: Syndecan-1 (309 aa).

An N-terminal signal peptide occupies residues 1–22 (MRRAALWLWLCALALRLQPVLP). At 23-253 (QIVTVNVPPE…GLLDRKEVLG (231 aa)) the chain is on the extracellular side. Disordered regions lie at residues 28–57 (NVPPEDQDGSGDDSDNFSGSGTGALPDITL) and 145–185 (TTAQ…GGTS). Residues 32–42 (EDQDGSGDDSD) are compositionally biased toward acidic residues. Ser37 carries an O-linked (Xyl...) (chondroitin sulfate) serine glycan. The N-linked (GlcNAc...) asparagine glycan is linked to Asn43. O-linked (Xyl...) (heparan sulfate) serine glycosylation is found at Ser45 and Ser47. Residues 173–183 (GQPDQQPPSGG) show a composition bias toward low complexity. O-linked (Xyl...) (chondroitin sulfate) serine glycosylation is found at Ser205 and Ser215. A helical transmembrane segment spans residues 254 to 274 (GVIAGGLVGLIFAVCLVGFML). Topologically, residues 275 to 309 (YRMKKKDEGSYSLEEPKQANGGAYQKPTKQEEFYA) are cytoplasmic. A disordered region spans residues 283-309 (GSYSLEEPKQANGGAYQKPTKQEEFYA). Ser284 is subject to Phosphoserine.

It belongs to the syndecan proteoglycan family. As to quaternary structure, interacts with CDCP1. Interacts (via C-terminus) with TIAM1 (via PDZ domain). Interacts with MDK. Shedding is enhanced by a number of factors such as heparanase, thrombin or EGF. Also by stress and wound healing. PMA-mediated shedding is inhibited by TIMP3.

It localises to the membrane. The protein resides in the secreted. It is found in the extracellular exosome. In terms of biological role, cell surface proteoglycan that contains both heparan sulfate and chondroitin sulfate and that links the cytoskeleton to the interstitial matrix. Regulates exosome biogenesis in concert with SDCBP and PDCD6IP. Able to induce its own expression in dental mesenchymal cells and also in the neighboring dental epithelial cells via an MSX1-mediated pathway. The sequence is that of Syndecan-1 from Mesocricetus auratus (Golden hamster).